An 800-amino-acid polypeptide reads, in one-letter code: Protocadherin beta-10 (800 aa).

An N-terminal signal peptide occupies residues 1-26 (MAVRELCFPRQRQVLFLFLFWGVSLA). Topologically, residues 27-692 (GSGFGRYSVT…AEADLLTVYL (666 aa)) are extracellular. Cadherin domains lie at 35-133 (VTEE…APVF), 138-242 (TVLK…APQF), 247-347 (YETQ…PPEL), 352-451 (FSNS…APAF), and 456-561 (YTLF…SPFV). N-linked (GlcNAc...) asparagine glycans are attached at residues asparagine 169 and asparagine 181. N-linked (GlcNAc...) asparagine glycans are attached at residues asparagine 418 and asparagine 436. Asparagine 567 carries N-linked (GlcNAc...) asparagine glycosylation. Residues 568-671 (GSAPCTELVP…LVDGFSQPYL (104 aa)) enclose the Cadherin 6 domain. The chain crosses the membrane as a helical span at residues 693 to 713 (VVALASVSSLFLLSVLLFVAV). At 714–800 (RLCRRSRAAS…FRNSFGFNIQ (87 aa)) the chain is on the cytoplasmic side.

It localises to the cell membrane. Functionally, potential calcium-dependent cell-adhesion protein. May be involved in the establishment and maintenance of specific neuronal connections in the brain. The chain is Protocadherin beta-10 (PCDHB10) from Homo sapiens (Human).